An 85-amino-acid chain; its full sequence is Large ribosomal subunit protein bL27 (85 aa).

It belongs to the bacterial ribosomal protein bL27 family.

In Solibacter usitatus (strain Ellin6076), this protein is Large ribosomal subunit protein bL27.